The chain runs to 514 residues: Cytochrome P450 monooxygenase FUS8 (514 aa).

Residues 28–48 form a helical membrane-spanning segment; it reads LTVTKAVGAFIVLFIIIPKVF. 2 N-linked (GlcNAc...) asparagine glycosylation sites follow: N225 and N443. Residue C460 participates in heme binding.

Belongs to the cytochrome P450 family. Requires heme as cofactor.

The protein localises to the membrane. It participates in mycotoxin biosynthesis. In terms of biological role, cytochrome P450 monooxygenase; part of the gene cluster that mediates the biosynthesis of the mycotoxin fusarin C. Within the cluster, FUS1, FUS2, FUS8 and FUS9 are sufficient for fusarin production. The roles of the other FUS members are yet undetermined. The fusarin C synthetase FUS1 is responsible for the condensation of one acetyl-coenzyme A (CoA) unit with six malonyl-CoA units and the amide linkage of the arising heptaketide and homoserine, subsequently releasing the first intermediate, prefusarin, as an alcohol with an open ring structure. The cytochrome P450 monooxygenase FUS8 participates in multiple oxidation processes at carbon C-20 and is able to use the FUS1 product as substrate, resulting in formation of 20-hydroxy-prefusarin. This reaction seems to be essential before the 2-pyrrolidone ring closure can be catalyzed by FUS2, generating 20-hydroxy-fusarin. FUS8 is able to further oxidizes carbon C-20 after ring closure, resulting in the formation of carboxy-fusarin C. As the last step, FUS9 methylates the hydroxyl group at C-21 to generate fusarin C. Fusarin C can then rearrange to epi-fusarin C, the (z)-isomers, and fusarin A and fusarin D. This is Cytochrome P450 monooxygenase FUS8 from Gibberella moniliformis (strain M3125 / FGSC 7600) (Maize ear and stalk rot fungus).